Reading from the N-terminus, the 431-residue chain is Enolase (431 aa).

Position 163 (Gln163) interacts with (2R)-2-phosphoglycerate. The active-site Proton donor is Glu205. Mg(2+) contacts are provided by Asp242, Glu283, and Asp310. The (2R)-2-phosphoglycerate site is built by Lys335, Arg364, Ser365, and Lys386. The active-site Proton acceptor is Lys335.

It belongs to the enolase family. Requires Mg(2+) as cofactor.

The protein localises to the cytoplasm. Its subcellular location is the secreted. The protein resides in the cell surface. It carries out the reaction (2R)-2-phosphoglycerate = phosphoenolpyruvate + H2O. The protein operates within carbohydrate degradation; glycolysis; pyruvate from D-glyceraldehyde 3-phosphate: step 4/5. Its function is as follows. Catalyzes the reversible conversion of 2-phosphoglycerate (2-PG) into phosphoenolpyruvate (PEP). It is essential for the degradation of carbohydrates via glycolysis. This chain is Enolase, found in Kineococcus radiotolerans (strain ATCC BAA-149 / DSM 14245 / SRS30216).